Consider the following 175-residue polypeptide: Inner membrane protein p54 (175 aa).

Residues 32-52 (CTILVAIVVLIIIIIVLIYLF) form a helical membrane-spanning segment. Over residues 79 to 89 (QWAGATPQPGT) the composition is skewed to polar residues. The interval 79 to 121 (QWAGATPQPGTSKPAGATTGNVGKPITDRPATDRPVTNNPVTD) is disordered. The tract at residues 141 to 153 (YTTATTQNTASQT) is interaction with host DYNLL1.

This sequence belongs to the asfivirus envelope protein p54 family. As to quaternary structure, interacts with the host light chain cytoplasmic dynein DYNLL1; this interaction is critical for intracellular microtubule-dependent virus transport toward viral factories.

The protein resides in the virion membrane. Its subcellular location is the host cytoplasm. It is found in the host cytoskeleton. It localises to the host endoplasmic reticulum membrane. Functionally, inner envelope protein involved, through its interaction with host dynein, in the intracellular microtubule-dependent transport of viral capsid toward viral factories. Seems to induce caspase-3 activation and apoptosis. Plays a role in virion morphogenesis by recruiting and transforming the host ER membranes into the precursors of the viral envelope. Involved in virus attachment to the host cell. This is Inner membrane protein p54 from African swine fever virus (isolate Pig/Kenya/KEN-50/1950) (ASFV).